Reading from the N-terminus, the 324-residue chain is Beta-ketoacyl-[acyl-carrier-protein] synthase III (324 aa).

Active-site residues include C112 and H249. Positions 250–254 (QANRR) are ACP-binding. N279 is an active-site residue.

Belongs to the thiolase-like superfamily. FabH family. In terms of assembly, homodimer.

The protein localises to the cytoplasm. It catalyses the reaction malonyl-[ACP] + acetyl-CoA + H(+) = 3-oxobutanoyl-[ACP] + CO2 + CoA. It functions in the pathway lipid metabolism; fatty acid biosynthesis. Its function is as follows. Catalyzes the condensation reaction of fatty acid synthesis by the addition to an acyl acceptor of two carbons from malonyl-ACP. Catalyzes the first condensation reaction which initiates fatty acid synthesis and may therefore play a role in governing the total rate of fatty acid production. Possesses both acetoacetyl-ACP synthase and acetyl transacylase activities. Its substrate specificity determines the biosynthesis of branched-chain and/or straight-chain of fatty acids. This Streptococcus equi subsp. zooepidemicus (strain MGCS10565) protein is Beta-ketoacyl-[acyl-carrier-protein] synthase III.